A 100-amino-acid polypeptide reads, in one-letter code: ESAT-6-like protein EsxB (100 aa).

The protein belongs to the WXG100 family. CFP-10 subfamily. Forms a tight 1:1 complex with EsxA.

It localises to the secreted. A secreted protein that might play a role in virulence. Might serve as a chaperone to prevent uncontrolled membrane lysis by its partner EsxA. This is ESAT-6-like protein EsxB (esxB) from Mycobacterium leprae (strain TN).